The chain runs to 478 residues: Calcium/calmodulin-dependent protein kinase type II subunit alpha (478 aa).

Tyrosine 13 carries the phosphotyrosine modification. A Protein kinase domain is found at 13 to 271; sequence YQLFEELGKG…AAEALKHPWI (259 aa). ATP-binding positions include 19-27 and lysine 42; that span reads LGKGAFSVV. The active-site Proton acceptor is the aspartate 135. Residue serine 257 is modified to Phosphoserine. Threonine 286 carries the phosphothreonine; by autocatalysis modification. The tract at residues 290-300 is calmodulin-binding; that stretch reads LKKFNARRKLK. An interaction with BAALC region spans residues 310 to 320; sequence TRNFSGGKSGG. The interval 314-341 is disordered; sequence SGGKSGGNKKNDGVKESSESTNTTIEDE. Residues 322 to 331 show a composition bias toward basic and acidic residues; sequence KKNDGVKESS. Phosphoserine is present on residues serine 330, serine 331, and serine 333. Residues threonine 336 and threonine 337 each carry the phosphothreonine modification. Phosphoserine is present on serine 404.

The protein belongs to the protein kinase superfamily. CAMK Ser/Thr protein kinase family. CaMK subfamily. As to quaternary structure, there are 4 genes encoding calcium/calmodulin-dependent protein kinase type II chains: CAMK2A, CAMK2B, CAMK2G and CAMK2D. The corresponding proteins assemble into homo- or heteromultimeric holoenzymes composed of 12 subunits with two hexameric rings stacked one on top of the other. Interacts with BAALC. Interacts with MPDZ. Interacts with SYN1. Interacts with CAMK2N2. Interacts with SYNGAP1. Interacts with SYNPO2. Interacts with SHANK3. Interacts with GRIN2B. Interacts with CACNB2. Interacts with LRRC7. Interacts with GRM5. Interacts with DAGLA (via C-terminal); this interaction is enhanced by autophosphorylation of CAMK2A at Thr-286. Interacts with CAMK2N1; this interaction requires CAMK2A activation by Ca(2+). Requires Mg(2+) as cofactor. Post-translationally, autophosphorylation of Thr-286 following activation by Ca(2+)/calmodulin. Phosphorylation of Thr-286 locks the kinase into an activated state. Palmitoylated. Probably palmitoylated by ZDHHC3 and ZDHHC7. As to expression, expressed in brain. In terms of tissue distribution, expressed in skeletal muscle.

It localises to the cytoplasm. It is found in the synapse. Its subcellular location is the postsynaptic density. The protein localises to the cell projection. The protein resides in the dendritic spine. It localises to the dendrite. It catalyses the reaction L-seryl-[protein] + ATP = O-phospho-L-seryl-[protein] + ADP + H(+). The enzyme catalyses L-threonyl-[protein] + ATP = O-phospho-L-threonyl-[protein] + ADP + H(+). With respect to regulation, activated by Ca(2+)/calmodulin. Binding of calmodulin results in conformational change that relieves intrasteric autoinhibition and allows autophosphorylation of Thr-286 which turns the kinase in a constitutively active form and confers to the kinase a Ca(2+)-independent activity. Its function is as follows. Calcium/calmodulin-dependent protein kinase that functions autonomously after Ca(2+)/calmodulin-binding and autophosphorylation, and is involved in various processes, such as synaptic plasticity, neurotransmitter release and long-term potentiation. Member of the NMDAR signaling complex in excitatory synapses, it regulates NMDAR-dependent potentiation of the AMPAR and therefore excitatory synaptic transmission. Regulates dendritic spine development. Also regulates the migration of developing neurons. Phosphorylates the transcription factor FOXO3 to activate its transcriptional activity. Phosphorylates the transcription factor ETS1 in response to calcium signaling, thereby decreasing ETS1 affinity for DNA. In response to interferon-gamma (IFN-gamma) stimulation, catalyzes phosphorylation of STAT1, stimulating the JAK-STAT signaling pathway. In response to interferon-beta (IFN-beta) stimulation, stimulates the JAK-STAT signaling pathway. Acts as a negative regulator of 2-arachidonoylglycerol (2-AG)-mediated synaptic signaling via modulation of DAGLA activity. In terms of biological role, has no kinase activity. In Mus musculus (Mouse), this protein is Calcium/calmodulin-dependent protein kinase type II subunit alpha (Camk2a).